Reading from the N-terminus, the 535-residue chain is CTP synthase (535 aa).

The interval 1–267 (MTKYIFVTGG…DKLVCDHMKL (267 aa)) is amidoligase domain. S13 contacts CTP. UTP is bound at residue S13. ATP is bound at residue 14-19 (SLGKGI). Y54 serves as a coordination point for L-glutamine. Residue D71 participates in ATP binding. Mg(2+) is bound by residues D71 and E141. Residues 148–150 (DIE), 188–193 (KTKPTQ), and K224 contribute to the CTP site. Residues 188-193 (KTKPTQ) and K224 contribute to the UTP site. The 243-residue stretch at 292–534 (TISLVGKYVE…IGASVQAAEQ (243 aa)) folds into the Glutamine amidotransferase type-1 domain. G354 provides a ligand contact to L-glutamine. Residue C381 is the Nucleophile; for glutamine hydrolysis of the active site. Residues 382 to 385 (LGMQ), E405, and R462 each bind L-glutamine. Active-site residues include H507 and E509.

It belongs to the CTP synthase family. As to quaternary structure, homotetramer.

The enzyme catalyses UTP + L-glutamine + ATP + H2O = CTP + L-glutamate + ADP + phosphate + 2 H(+). The catalysed reaction is L-glutamine + H2O = L-glutamate + NH4(+). It catalyses the reaction UTP + NH4(+) + ATP = CTP + ADP + phosphate + 2 H(+). It participates in pyrimidine metabolism; CTP biosynthesis via de novo pathway; CTP from UDP: step 2/2. With respect to regulation, allosterically activated by GTP, when glutamine is the substrate; GTP has no effect on the reaction when ammonia is the substrate. The allosteric effector GTP functions by stabilizing the protein conformation that binds the tetrahedral intermediate(s) formed during glutamine hydrolysis. Inhibited by the product CTP, via allosteric rather than competitive inhibition. Its function is as follows. Catalyzes the ATP-dependent amination of UTP to CTP with either L-glutamine or ammonia as the source of nitrogen. Regulates intracellular CTP levels through interactions with the four ribonucleotide triphosphates. The chain is CTP synthase from Bacillus velezensis (strain DSM 23117 / BGSC 10A6 / LMG 26770 / FZB42) (Bacillus amyloliquefaciens subsp. plantarum).